A 267-amino-acid chain; its full sequence is Diacetylchitobiose deacetylase (267 aa).

Belongs to the PIGL family. As to quaternary structure, homohexamer.

It localises to the cytoplasm. The enzyme catalyses N,N'-diacetylchitobiose + H2O = beta-D-glucosaminyl-(1-&gt;4)-N-acetyl-D-glucosamine + acetate. It functions in the pathway glycan degradation; chitin degradation. Deacylates the non-reducing end of diacetylchitobiose (GlcNAc2). Can also use N-acetylglucosamine (GlcNAc) and N-acetylchitotriose (GlcNAc3). Probably involved in chitin degradation. This chain is Diacetylchitobiose deacetylase (dac), found in Thermococcus kodakarensis (strain ATCC BAA-918 / JCM 12380 / KOD1) (Pyrococcus kodakaraensis (strain KOD1)).